The chain runs to 122 residues: Large ribosomal subunit protein uL14 (122 aa).

The protein belongs to the universal ribosomal protein uL14 family. In terms of assembly, part of the 50S ribosomal subunit. Forms a cluster with proteins L3 and L19. In the 70S ribosome, L14 and L19 interact and together make contacts with the 16S rRNA in bridges B5 and B8.

Its function is as follows. Binds to 23S rRNA. Forms part of two intersubunit bridges in the 70S ribosome. The sequence is that of Large ribosomal subunit protein uL14 from Clavibacter michiganensis subsp. michiganensis (strain NCPPB 382).